A 495-amino-acid chain; its full sequence is Meiosis-specific nuclear structural protein 1 (495 aa).

The segment at M1–E314 is interaction with BBOF1. A coiled-coil region spans residues L59–K410. Y188 is modified (phosphotyrosine).

Belongs to the MNS1 family. As to quaternary structure, able to form oligomers. Microtubule inner protein component of sperm flagellar doublet microtubules. Interacts with ODAD1. Interacts with BBOF1.

The protein localises to the nucleus. It is found in the cytoplasm. It localises to the cytoskeleton. Its subcellular location is the cilium axoneme. The protein resides in the flagellum axoneme. In terms of biological role, microtubule inner protein (MIP) part of the dynein-decorated doublet microtubules (DMTs) in cilia axoneme, which is required for motile cilia beating. May play a role in the control of meiotic division and germ cell differentiation through regulation of pairing and recombination during meiosis. Required for sperm flagella assembly. May play a role in the assembly and function of the outer dynein arm-docking complex (ODA-DC). ODA-DC mediates outer dynein arms (ODA) binding onto the axonemal doublet microtubules. In Macaca fascicularis (Crab-eating macaque), this protein is Meiosis-specific nuclear structural protein 1 (MNS1).